We begin with the raw amino-acid sequence, 622 residues long: WD repeat-containing protein 76 (622 aa).

3 disordered regions span residues Asn-75–Val-94, Glu-120–Gly-155, and Met-189–Glu-209. Over residues Val-80 to Val-94 the composition is skewed to basic residues. WD repeat units follow at residues Val-310–Met-351, Ala-356–Arg-398, Glu-400–Glu-438, Ser-443–Ser-482, Glu-490–Pro-530, Val-540–Leu-584, and Glu-587–Thr-622.

This sequence belongs to the WD repeat DDB2/WDR76 family. Interacts with CUL4A and/or CUL4B.

Functionally, specifically binds 5-hydroxymethylcytosine (5hmC), suggesting that it acts as a specific reader of 5hmC. The chain is WD repeat-containing protein 76 (Wdr76) from Mus musculus (Mouse).